The chain runs to 257 residues: Tryptophan synthase alpha chain (257 aa).

Active-site proton acceptor residues include Glu-47 and Asp-58.

The protein belongs to the TrpA family. As to quaternary structure, tetramer of two alpha and two beta chains.

It carries out the reaction (1S,2R)-1-C-(indol-3-yl)glycerol 3-phosphate + L-serine = D-glyceraldehyde 3-phosphate + L-tryptophan + H2O. Its pathway is amino-acid biosynthesis; L-tryptophan biosynthesis; L-tryptophan from chorismate: step 5/5. Its function is as follows. The alpha subunit is responsible for the aldol cleavage of indoleglycerol phosphate to indole and glyceraldehyde 3-phosphate. The chain is Tryptophan synthase alpha chain from Listeria monocytogenes serotype 4b (strain F2365).